The following is a 67-amino-acid chain: uncharacterized protein (67 aa).

Residues 26 to 46 (CYLLFCFLECFLNLFKKCGVF) form a helical membrane-spanning segment.

This sequence belongs to the plectrovirus ORF11 family.

It is found in the host membrane. This is an uncharacterized protein from Spiroplasma virus SpV1-C74 (SpV1).